Reading from the N-terminus, the 132-residue chain is Large-conductance mechanosensitive channel (132 aa).

A run of 2 helical transmembrane segments spans residues 11-31 and 75-95; these read FISRGNALDLAVGVVIGGAFG and GSFLQAVFDFVIIAFAIFLLV.

This sequence belongs to the MscL family. Homopentamer.

Its subcellular location is the cell inner membrane. Channel that opens in response to stretch forces in the membrane lipid bilayer. May participate in the regulation of osmotic pressure changes within the cell. The chain is Large-conductance mechanosensitive channel from Synechococcus sp. (strain JA-2-3B'a(2-13)) (Cyanobacteria bacterium Yellowstone B-Prime).